The chain runs to 109 residues: U4-lycotoxin-Ls1c (109 aa).

Positions 1–22 (MKVLVLFSVLFLTLFSYSSTEA) are cleaved as a signal peptide. The propeptide occupies 23 to 44 (IDEFDSDAEDDMLSLMANEQVR). The interval 45–88 (AKACTPRLHDCSHDRHSCCRGELFKDVCYCFYPEGEDITEVCSC) is knottin domain. 4 cysteine pairs are disulfide-bonded: Cys-48–Cys-63, Cys-55–Cys-72, Cys-62–Cys-88, and Cys-74–Cys-86. The interval 89 to 108 (QQPKSHKYIEKVVDKAKTVV) is linear cationic cytotoxin domain.

The protein belongs to the neurotoxin 19 (CSTX) family. 05 (U4-Lctx) subfamily. As to expression, expressed by the venom gland.

Its subcellular location is the secreted. Functionally, enhances the high-affinity desensitization of human P2RX3 purinoceptors. This chain is U4-lycotoxin-Ls1c, found in Lycosa singoriensis (Wolf spider).